The primary structure comprises 435 residues: MIWKRSAVLRFYSVCGLLLLGSQGQFPLTQNVTVVEGGTAILTCRVDQNDNTSLQWSNPAQQTLYFDDKKALRDNRIELVRASWHELSISVSDVSLSDEGQYTCSLFTMPVKTSKAYLTVLGVPEKPQISGFSSPVMEGDLMQLTCKTSGSKPAADIRWFKNDKEIKDVKYLKEEDANRKTFTVSSTLDFRVDRSDDGVAVICRVDHESLNATPQVAMQVLEIHYTPSVKIIPSTPFPQEGQALTLTCESKGKPLPEPVLWTKDGAELPDPDRMVVSGRELNILFLNKTDNGTYRCEATNTIGQSSAEYVLIVHDVPNTLLPTTIIPSLTTAPVTTTVAITTSPSTSASSSSRRDPNSLAGQNGPDHALIGGIVAVVVFVTLCSIFLLGRYLARHKGTYLTNEAKGAEDAPDADTAIINAEGSQVNAEEKKEYFI.

The N-terminal stretch at 1 to 24 (MIWKRSAVLRFYSVCGLLLLGSQG) is a signal peptide. At 25–367 (QFPLTQNVTV…SLAGQNGPDH (343 aa)) the chain is on the extracellular side. In terms of domain architecture, Ig-like V-type spans 27-119 (PLTQNVTVVE…PVKTSKAYLT (93 aa)). N-linked (GlcNAc...) asparagine glycans are attached at residues Asn31 and Asn51. Intrachain disulfides connect Cys44/Cys104, Cys146/Cys203, and Cys248/Cys296. Ig-like C2-type domains follow at residues 127 to 219 (PQIS…VAMQ) and 227 to 312 (PSVK…YVLI). The N-linked (GlcNAc...) asparagine glycan is linked to Asn291. Residues 341–351 (TTSPSTSASSS) show a composition bias toward low complexity. The interval 341–360 (TTSPSTSASSSSRRDPNSLA) is disordered. Residues 368–388 (ALIGGIVAVVVFVTLCSIFLL) form a helical membrane-spanning segment. Residues 389–435 (GRYLARHKGTYLTNEAKGAEDAPDADTAIINAEGSQVNAEEKKEYFI) lie on the Cytoplasmic side of the membrane. At Ser423 the chain carries Phosphoserine.

The protein belongs to the nectin family. Post-translationally, glycosylation at Asn-51 reduces adhesive binding.

The protein localises to the cell membrane. It is found in the synapse. The protein resides in the cell projection. Its subcellular location is the axon. Adhesion molecule that engages in homo- and heterophilic interactions with the other nectin-like family members, leading to cell aggregation. Important for synapse organization, providing regulated trans-synaptic adhesion. Preferentially binds to oligodendrocytes. The protein is Cell adhesion molecule 2 (Cadm2) of Rattus norvegicus (Rat).